Here is a 543-residue protein sequence, read N- to C-terminus: MITKLFFHQVGDNKKRLIWYWKLLIIIAVLAIVIYSWIDNFSSFNQFGLNVFINNITSLFTPNLNHEYTLVRFLAQTAFFVTGGSFLGFIFAILFSYWTAFKIQPFYIALPIRLITIVLRAFPVLLFGFLFSNLFNKQLAATLTISWFSFLWNTKYITTFFENSNLKYFFNKKIREGSGFKAFWTTIFLSENERLWLFFLYSLEANFRWTTLLSIFGIGGIGQLIVDPLSIRVQFDLVLIPLVVLITFLIFIEVVVFLLSSFVFEKNSEDLRPILKTTVIEKRKWKRIIFILFIVVLISLSLANLVTIDYRINDAEFLQDFFNQFFQLKSNLFSSNDPNINPILMLVKLTTQAISLISLVVIFSILFGFISCNLFKKRFSISFKILLLFVRVVPSILLFRLLDPLFLEAKTTIILVLLINHGSSYGQLMSINFNKANQNIINNYKNHGMTKGFILWNYLLVENKPNLINITSDAYDSVIRDLILFGSFGGSIIGSRITNFFERAQFDNLGSVTIPLMVYLIAIEIIFLSVRLTRISVFKNYLY.

The next 12 membrane-spanning stretches (helical) occupy residues 18 to 38 (IWYW…YSWI), 78 to 98 (AFFV…FSYW), 115 to 135 (ITIV…SNLF), 141 to 161 (ATLT…TTFF), 211 to 231 (TLLS…PLSI), 237 to 257 (LVLI…VVVF), 288 to 308 (IIFI…LVTI), 354 to 374 (ISLI…SCNL), 379 to 399 (FSIS…ILLF), 413 to 433 (IILV…SINF), 482 to 502 (LILF…NFFE), and 510 to 530 (GSVT…FLSV). Residues 74 to 256 (LAQTAFFVTG…TFLIFIEVVV (183 aa)) enclose the ABC transmembrane type-1 domain.

Belongs to the binding-protein-dependent transport system permease family.

It is found in the cell membrane. Its function is as follows. Probably part of a high-affinity transport system. The protein is ABC transport system permease protein p69 (p69) of Mycoplasma genitalium (strain ATCC 33530 / DSM 19775 / NCTC 10195 / G37) (Mycoplasmoides genitalium).